The chain runs to 365 residues: UDP-N-acetylglucosamine--N-acetylmuramyl-(pentapeptide) pyrophosphoryl-undecaprenol N-acetylglucosamine transferase (365 aa).

UDP-N-acetyl-alpha-D-glucosamine-binding positions include 17 to 19 (TGG), Asn-129, Arg-167, Ser-194, Ile-250, 269 to 274 (ALTVSE), and Gln-295.

Belongs to the glycosyltransferase 28 family. MurG subfamily.

Its subcellular location is the cell inner membrane. The catalysed reaction is di-trans,octa-cis-undecaprenyl diphospho-N-acetyl-alpha-D-muramoyl-L-alanyl-D-glutamyl-meso-2,6-diaminopimeloyl-D-alanyl-D-alanine + UDP-N-acetyl-alpha-D-glucosamine = di-trans,octa-cis-undecaprenyl diphospho-[N-acetyl-alpha-D-glucosaminyl-(1-&gt;4)]-N-acetyl-alpha-D-muramoyl-L-alanyl-D-glutamyl-meso-2,6-diaminopimeloyl-D-alanyl-D-alanine + UDP + H(+). The protein operates within cell wall biogenesis; peptidoglycan biosynthesis. Functionally, cell wall formation. Catalyzes the transfer of a GlcNAc subunit on undecaprenyl-pyrophosphoryl-MurNAc-pentapeptide (lipid intermediate I) to form undecaprenyl-pyrophosphoryl-MurNAc-(pentapeptide)GlcNAc (lipid intermediate II). The chain is UDP-N-acetylglucosamine--N-acetylmuramyl-(pentapeptide) pyrophosphoryl-undecaprenol N-acetylglucosamine transferase from Shewanella pealeana (strain ATCC 700345 / ANG-SQ1).